Here is a 242-residue protein sequence, read N- to C-terminus: Octanoyltransferase (242 aa).

Positions 31 to 206 constitute a BPL/LPL catalytic domain; the sequence is SQTTDEIWFL…LFLKNFGYNQ (176 aa). Substrate-binding positions include 70-77, 137-139, and 150-152; these read RGGQVTYH, SIG, and GLA. Cys-168 functions as the Acyl-thioester intermediate in the catalytic mechanism.

It belongs to the LipB family.

It localises to the cytoplasm. The enzyme catalyses octanoyl-[ACP] + L-lysyl-[protein] = N(6)-octanoyl-L-lysyl-[protein] + holo-[ACP] + H(+). It functions in the pathway protein modification; protein lipoylation via endogenous pathway; protein N(6)-(lipoyl)lysine from octanoyl-[acyl-carrier-protein]: step 1/2. Functionally, catalyzes the transfer of endogenously produced octanoic acid from octanoyl-acyl-carrier-protein onto the lipoyl domains of lipoate-dependent enzymes. Lipoyl-ACP can also act as a substrate although octanoyl-ACP is likely to be the physiological substrate. The protein is Octanoyltransferase of Coxiella burnetii (strain RSA 493 / Nine Mile phase I).